The sequence spans 299 residues: UTP--glucose-1-phosphate uridylyltransferase (299 aa).

Belongs to the UDPGP type 2 family.

The catalysed reaction is alpha-D-glucose 1-phosphate + UTP + H(+) = UDP-alpha-D-glucose + diphosphate. The protein operates within carbohydrate metabolism; nucleotide-sugar metabolism. It participates in capsule biogenesis; capsule polysaccharide biosynthesis. In Streptococcus pneumoniae serotype 4 (strain ATCC BAA-334 / TIGR4), this protein is UTP--glucose-1-phosphate uridylyltransferase (cap4C).